An 81-amino-acid chain; its full sequence is Exodeoxyribonuclease 7 small subunit (81 aa).

It belongs to the XseB family. In terms of assembly, heterooligomer composed of large and small subunits.

It is found in the cytoplasm. It carries out the reaction Exonucleolytic cleavage in either 5'- to 3'- or 3'- to 5'-direction to yield nucleoside 5'-phosphates.. Bidirectionally degrades single-stranded DNA into large acid-insoluble oligonucleotides, which are then degraded further into small acid-soluble oligonucleotides. The chain is Exodeoxyribonuclease 7 small subunit from Pasteurella multocida (strain Pm70).